Consider the following 258-residue polypeptide: Acetylglutamate kinase (258 aa).

Substrate contacts are provided by residues 44–45, arginine 66, and asparagine 158; that span reads GG. ATP is bound by residues 181-186 and 209-211; these read DVSGIL and IIT.

Belongs to the acetylglutamate kinase family. ArgB subfamily. In terms of assembly, homodimer.

It is found in the cytoplasm. The enzyme catalyses N-acetyl-L-glutamate + ATP = N-acetyl-L-glutamyl 5-phosphate + ADP. The protein operates within amino-acid biosynthesis; L-arginine biosynthesis; N(2)-acetyl-L-ornithine from L-glutamate: step 2/4. Its function is as follows. Catalyzes the ATP-dependent phosphorylation of N-acetyl-L-glutamate. The protein is Acetylglutamate kinase of Shigella sonnei (strain Ss046).